Consider the following 181-residue polypeptide: uncharacterized protein (181 aa).

The N-terminal stretch at 1-23 (MKKCLLFLTTIALILSLSTNAFA) is a signal peptide.

This is an uncharacterized protein from Bacillus subtilis (strain 168).